A 393-amino-acid polypeptide reads, in one-letter code: Triacylglycerol lipase 1 (393 aa).

The signal sequence occupies residues 1-20; the sequence is MKWLLVAVLTSLTIFSALTQ. N-linked (GlcNAc...) asparagine glycosylation occurs at N41. The Nucleophile role is filled by S166. N261 is a glycosylation site (N-linked (GlcNAc...) asparagine). Active-site charge relay system residues include D334 and H363.

Belongs to the AB hydrolase superfamily. Lipase family. Expressed in seedlings, roots, leaves, flowers and siliques. Specifically expressed in the epidermis.

It is found in the secreted. The enzyme catalyses a triacylglycerol + H2O = a diacylglycerol + a fatty acid + H(+). The catalysed reaction is 1,2,3-tributanoylglycerol + H2O = dibutanoylglycerol + butanoate + H(+). It catalyses the reaction 1,2,3-trioctanoylglycerol + H2O = dioctanoylglycerol + octanoate + H(+). Its pathway is lipid metabolism; glycerolipid metabolism. Triacylglycerol (TAG) lipase active on triolein, trioctanoin, tributyrin and 1,3-Diolein, but not on phospho- and galactolipids. Involved but dispensable for TAG storage breakdown during seed germination. This Arabidopsis thaliana (Mouse-ear cress) protein is Triacylglycerol lipase 1.